The primary structure comprises 304 residues: CD-NTase-associated protein 6 (304 aa).

75-80 (GTGKTS) provides a ligand contact to ATP.

The protein belongs to the AAA ATPase family. Oligomerizes. Homohexamer. Forms a 1:1:6 CdnD:Cap7:Cap6 complex.

In terms of biological role, regulates complex assembly in a CBASS antivirus system. CBASS (cyclic oligonucleotide-based antiphage signaling system) provides immunity against bacteriophage. The CD-NTase protein synthesizes cyclic nucleotides in response to infection; these serve as specific second messenger signals. The signals activate a diverse range of effectors, leading to bacterial cell death and thus abortive phage infection. A type III-C(AAA) CBASS system. Its function is as follows. Prevents the CdnD:Cap7:Cap8 complex (also called CdnD:HORMA2:HORMA3) from synthesizing 2',3',3'-cyclic AMP-AMP-AMP (cAAA). Binds and disassembles an active CdnD:Cap7:Cap8 complex, inhibiting the complex's ability to synthesize cyclic nucleotide second messengers. An AAA+-ATPase remodeler, in the absence of foreign threat Cap6 probably maintains the Cap7 protein in an open, inactive state. Once activated (presumably by a bacteriophage protein) Cap7 binds to and activates its cognate CD-NTase (CdnD in this bacteria) to synthesize cAAA, a cyclic nucleotide second messenger. cAAA activates the NucC endonuclease which degrades all DNA in the infected cell, causing cell death and abortive phage infection. This chain is CD-NTase-associated protein 6, found in Pseudomonas aeruginosa.